The following is a 915-amino-acid chain: Alanine--tRNA ligase (915 aa).

Zn(2+)-binding residues include His605, His609, Cys709, and His713. Residues 882 to 901 are disordered; that stretch reads GGGGDERLAQGGGRNPDGLT.

It belongs to the class-II aminoacyl-tRNA synthetase family. Zn(2+) serves as cofactor.

It is found in the cytoplasm. It catalyses the reaction tRNA(Ala) + L-alanine + ATP = L-alanyl-tRNA(Ala) + AMP + diphosphate. Its function is as follows. Catalyzes the attachment of alanine to tRNA(Ala) in a two-step reaction: alanine is first activated by ATP to form Ala-AMP and then transferred to the acceptor end of tRNA(Ala). Also edits incorrectly charged Ser-tRNA(Ala) and Gly-tRNA(Ala) via its editing domain. The protein is Alanine--tRNA ligase of Methanopyrus kandleri (strain AV19 / DSM 6324 / JCM 9639 / NBRC 100938).